The following is a 78-amino-acid chain: Cytochrome b-c1 complex subunit 10, mitochondrial (78 aa).

At 1 to 26 (MVSYVKGPAYKALSHFGKLNAPLVRS) the chain is on the mitochondrial matrix side. Residues 27-46 (YIPNLVFWGAAAGGAVATFT) traverse the membrane as a helical segment. The Mitochondrial intermembrane segment spans residues 47 to 78 (EGVPLFQKTFYEKIPFFGQHWIYNPDPEDVPV).

It belongs to the UQCR11/QCR10 family. In terms of assembly, component of the ubiquinol-cytochrome c oxidoreductase (cytochrome b-c1 complex, complex III, CIII), a multisubunit enzyme composed of 10 subunits. The complex is composed of 3 respiratory subunits cytochrome b (COB), cytochrome c1 (CYT1) and Rieske protein (RIP1), 2 core protein subunits COR1 and QCR2, and 5 low-molecular weight protein subunits QCR6, QCR7, QCR8, QCR9 and QCR10. The complex exists as an obligatory dimer and forms supercomplexes (SCs) in the inner mitochondrial membrane with a monomer or a dimer of cytochrome c oxidase (complex IV, CIV), resulting in 2 different assemblies (supercomplexes III(2)IV and III(2)IV(2)).

The protein resides in the mitochondrion inner membrane. Component of the ubiquinol-cytochrome c oxidoreductase, a multisubunit transmembrane complex that is part of the mitochondrial electron transport chain which drives oxidative phosphorylation. The complex plays an important role in the uptake of multiple carbon sources present in different host niches. The sequence is that of Cytochrome b-c1 complex subunit 10, mitochondrial from Candida albicans (strain SC5314 / ATCC MYA-2876) (Yeast).